A 193-amino-acid chain; its full sequence is Probable GTP-binding protein EngB (193 aa).

Positions 20-193 (GVPEVAFAGR…ELAHEISRCI (174 aa)) constitute an EngB-type G domain. GTP-binding positions include 28–35 (GRSNVGKS), 55–59 (GSTRQ), 73–76 (DLPG), 140–143 (TKAD), and 171–176 (IMWVSS). Residues Ser35 and Thr57 each coordinate Mg(2+).

Belongs to the TRAFAC class TrmE-Era-EngA-EngB-Septin-like GTPase superfamily. EngB GTPase family. Mg(2+) serves as cofactor.

Necessary for normal cell division and for the maintenance of normal septation. This Anaplasma phagocytophilum (strain HZ) protein is Probable GTP-binding protein EngB.